The chain runs to 255 residues: Sporulation-specific N-acetylmuramoyl-L-alanine amidase (255 aa).

Residues 4-172 form the MurNAc-LAA domain; that stretch reads IFIDPGHGGS…LARGHANGLE (169 aa). Residues histidine 10, glutamate 24, and histidine 79 each coordinate Zn(2+). The active site involves glutamate 141. In terms of domain architecture, SPOR spans 180–254; the sequence is TSSSGLYKVQ…AGFDAIVILE (75 aa). 2 consecutive repeat copies span residues 184–219 and 220–255. Positions 184 to 255 are 2 X 35 AA approximate tandem repeats; sequence GLYKVQIGAF…GFDAIVILES (72 aa).

Belongs to the N-acetylmuramoyl-L-alanine amidase 3 family. Zn(2+) is required as a cofactor.

It localises to the secreted. Its subcellular location is the cell wall. It catalyses the reaction Hydrolyzes the link between N-acetylmuramoyl residues and L-amino acid residues in certain cell-wall glycopeptides.. Inhibited by EDTA. Autolysins are involved in some important biological processes such as cell separation, cell-wall turnover, competence for genetic transformation, formation of the flagella - in particular of its basal body - and sporulation. CwlC is able to hydrolyze type A cell walls such as B.subtilis. Its main function is to lyze the mother cell wall peptidoglycan, playing a role during sporulation. The protein is Sporulation-specific N-acetylmuramoyl-L-alanine amidase (cwlC) of Bacillus subtilis (strain 168).